Here is a 124-residue protein sequence, read N- to C-terminus: Nascent polypeptide-associated complex protein (124 aa).

Residues 7 to 74 (GLNPRKMKQM…PESRERGDSG (68 aa)) enclose the NAC-A/B domain. The interval 53–124 (AQGQQTYQVV…DLAAAVQKLE (72 aa)) is disordered. The segment covering 74–93 (GSEDDSETESGGEFSEDDVE) has biased composition (acidic residues).

The protein belongs to the NAC-alpha family. In terms of assembly, homodimer. Interacts with the ribosome. Binds ribosomal RNA.

Functionally, contacts the emerging nascent chain on the ribosome. The polypeptide is Nascent polypeptide-associated complex protein (Natronomonas pharaonis (strain ATCC 35678 / DSM 2160 / CIP 103997 / JCM 8858 / NBRC 14720 / NCIMB 2260 / Gabara) (Halobacterium pharaonis)).